The primary structure comprises 198 residues: Large ribosomal subunit protein bL25 (198 aa).

Belongs to the bacterial ribosomal protein bL25 family. CTC subfamily. Part of the 50S ribosomal subunit; part of the 5S rRNA/L5/L18/L25 subcomplex. Contacts the 5S rRNA. Binds to the 5S rRNA independently of L5 and L18.

This is one of the proteins that binds to the 5S RNA in the ribosome where it forms part of the central protuberance. This is Large ribosomal subunit protein bL25 from Phocaeicola vulgatus (strain ATCC 8482 / DSM 1447 / JCM 5826 / CCUG 4940 / NBRC 14291 / NCTC 11154) (Bacteroides vulgatus).